The following is a 385-amino-acid chain: Mannitol-1-phosphate 5-dehydrogenase (385 aa).

3 to 14 serves as a coordination point for NAD(+); the sequence is ALQFGAGNIGRG.

It belongs to the mannitol dehydrogenase family.

It catalyses the reaction D-mannitol 1-phosphate + NAD(+) = beta-D-fructose 6-phosphate + NADH + H(+). This chain is Mannitol-1-phosphate 5-dehydrogenase (mtlD), found in Buchnera aphidicola subsp. Acyrthosiphon pisum (strain APS) (Acyrthosiphon pisum symbiotic bacterium).